An 81-amino-acid polypeptide reads, in one-letter code: Photosystem I iron-sulfur center (81 aa).

4Fe-4S ferredoxin-type domains are found at residues 2 to 31 (AHSVKVYDTCIGCTQCVRACPCDVLEMVPW) and 39 to 68 (IASAPRTEDCIGCKRCETACPTDFLSVRVY). Cys11, Cys14, Cys17, Cys21, Cys48, Cys51, Cys54, and Cys58 together coordinate [4Fe-4S] cluster.

As to quaternary structure, the eukaryotic PSI reaction center is composed of at least 11 subunits. [4Fe-4S] cluster is required as a cofactor.

It is found in the plastid. The protein resides in the chloroplast thylakoid membrane. The enzyme catalyses reduced [plastocyanin] + hnu + oxidized [2Fe-2S]-[ferredoxin] = oxidized [plastocyanin] + reduced [2Fe-2S]-[ferredoxin]. In terms of biological role, apoprotein for the two 4Fe-4S centers FA and FB of photosystem I (PSI); essential for photochemical activity. FB is the terminal electron acceptor of PSI, donating electrons to ferredoxin. The C-terminus interacts with PsaA/B/D and helps assemble the protein into the PSI complex. Required for binding of PsaD and PsaE to PSI. PSI is a plastocyanin/cytochrome c6-ferredoxin oxidoreductase, converting photonic excitation into a charge separation, which transfers an electron from the donor P700 chlorophyll pair to the spectroscopically characterized acceptors A0, A1, FX, FA and FB in turn. The sequence is that of Photosystem I iron-sulfur center from Pyropia yezoensis (Susabi-nori).